Consider the following 340-residue polypeptide: DNA-directed RNA polymerase subunit alpha (340 aa).

The alpha N-terminal domain (alpha-NTD) stretch occupies residues 1–235 (MYRNWTELIK…DQLNPFINFD (235 aa)). Positions 251–340 (WNPNLFRKVD…LSKQFEEENF (90 aa)) are alpha C-terminal domain (alpha-CTD).

This sequence belongs to the RNA polymerase alpha chain family. Homodimer. The RNAP catalytic core consists of 2 alpha, 1 beta, 1 beta' and 1 omega subunit. When a sigma factor is associated with the core the holoenzyme is formed, which can initiate transcription.

It carries out the reaction RNA(n) + a ribonucleoside 5'-triphosphate = RNA(n+1) + diphosphate. In terms of biological role, DNA-dependent RNA polymerase catalyzes the transcription of DNA into RNA using the four ribonucleoside triphosphates as substrates. The chain is DNA-directed RNA polymerase subunit alpha from Magnetococcus marinus (strain ATCC BAA-1437 / JCM 17883 / MC-1).